The primary structure comprises 1260 residues: Agglutinin-like protein 1 (1260 aa).

The signal sequence occupies residues 1-17 (MLQQFTLLFLYLSIASA). 4 disulfides stabilise this stretch: cysteine 73–cysteine 150, cysteine 96–cysteine 112, cysteine 205–cysteine 298, and cysteine 227–cysteine 256. Repeat copies occupy residues 433-468 (SPNP…IIRE), 469-504 (PPNH…IIRE), 505-540 (PPNP…IIRE), 541-576 (PPNP…IIRE), 577-612 (PPNH…IIRE), 613-648 (PPNH…IIRE), 649-684 (PPNP…LIRE), 685-720 (PPNH…LIRE), 721-756 (PPNH…IIRE), and 757-792 (PPNP…IIYE). The tract at residues 433–792 (SPNPTVSTTE…GGTDTVIIYE (360 aa)) is 10 X 36 AA tandem repeats. An N-linked (GlcNAc...) asparagine glycan is attached at asparagine 471. Residues asparagine 579 and asparagine 615 are each glycosylated (N-linked (GlcNAc...) asparagine). Residues asparagine 687 and asparagine 723 are each glycosylated (N-linked (GlcNAc...) asparagine). N-linked (GlcNAc...) asparagine glycosylation is found at asparagine 820, asparagine 886, asparagine 918, and asparagine 973. 2 stretches are compositionally biased toward polar residues: residues 896 to 918 (PTAS…SSDN) and 964 to 979 (KVTF…GTHD). Disordered stretches follow at residues 896–924 (PTAS…KSGV) and 954–1226 (SIPS…SSSP). Positions 980–995 (SQSTSTEIEIVTTSST) are enriched in low complexity. A 2-1 repeat occupies 983-1043 (TSTEIEIVTT…TTSQPTGDNG (61 aa)). A 2 X 26 AA approximate repeats region spans residues 983–1152 (TSTEIEIVTT…ATTQATNENG (170 aa)). Residues 1002-1062 (VSSNTDLTSE…PTVATSTLAS (61 aa)) show a composition bias toward polar residues. Residues asparagine 1045 and asparagine 1068 are each glycosylated (N-linked (GlcNAc...) asparagine). Positions 1073–1090 (HESASTSLKPSMGENSGL) are enriched in polar residues. The segment covering 1091–1110 (TTSTEIEATTTSPTEAPSPA) has biased composition (low complexity). One copy of the 2-2 repeat lies at 1092-1152 (TSTEIEATTT…ATTQATNENG (61 aa)). Polar residues predominate over residues 1111–1154 (VSSGTDVTTEPTDTREQPTTLSTTSKTNSESVATTQATNENGGK). Low complexity-rich tracts occupy residues 1155–1176 (SPST…SANS) and 1197–1226 (SHST…SSSP).

This sequence belongs to the ALS family. Post-translationally, N-glycosylated and O-glycosylated. In terms of processing, the GPI-anchor is attached to the protein in the endoplasmic reticulum and serves to target the protein to the cell surface. There, the glucosamine-inositol phospholipid moiety is cleaved off and the GPI-modified mannoprotein is covalently attached via its lipidless GPI glycan remnant to the 1,6-beta-glucan of the outer cell wall layer.

It localises to the cell membrane. Its subcellular location is the secreted. The protein resides in the cell wall. Its function is as follows. Major cell surface adhesion protein which mediates both yeast-to-host tissue adherence and yeast aggregation. Acts as a downstream effector of the EFG1 regulatory pathway. Required for rapamycin-induced aggregation of C.albicans. Binds glycans and mediates adherence to endothelial and epithelial cells, thereby playing an important role in the pathogenesis of C.albicans infections. The polypeptide is Agglutinin-like protein 1 (ALS1) (Candida albicans (Yeast)).